The chain runs to 328 residues: 4-hydroxythreonine-4-phosphate dehydrogenase (328 aa).

Residues histidine 135 and threonine 136 each contribute to the substrate site. Residues histidine 165, histidine 210, and histidine 265 each contribute to the a divalent metal cation site. Substrate-binding residues include lysine 273, asparagine 282, and arginine 291.

This sequence belongs to the PdxA family. In terms of assembly, homodimer. The cofactor is Zn(2+). Requires Mg(2+) as cofactor. Co(2+) is required as a cofactor.

The protein localises to the cytoplasm. The catalysed reaction is 4-(phosphooxy)-L-threonine + NAD(+) = 3-amino-2-oxopropyl phosphate + CO2 + NADH. It functions in the pathway cofactor biosynthesis; pyridoxine 5'-phosphate biosynthesis; pyridoxine 5'-phosphate from D-erythrose 4-phosphate: step 4/5. Functionally, catalyzes the NAD(P)-dependent oxidation of 4-(phosphooxy)-L-threonine (HTP) into 2-amino-3-oxo-4-(phosphooxy)butyric acid which spontaneously decarboxylates to form 3-amino-2-oxopropyl phosphate (AHAP). The sequence is that of 4-hydroxythreonine-4-phosphate dehydrogenase from Enterobacter sp. (strain 638).